We begin with the raw amino-acid sequence, 774 residues long: Protein translocase subunit SecA 2 (774 aa).

Residues Gln-94, 112–116 (GEGKT), and Asp-501 contribute to the ATP site.

Belongs to the SecA family. As to quaternary structure, monomer and homodimer. Part of the essential Sec protein translocation apparatus which comprises SecA, SecYEG and auxiliary proteins SecDF. Other proteins may also be involved.

It localises to the cell membrane. The protein resides in the cytoplasm. The catalysed reaction is ATP + H2O + cellular proteinSide 1 = ADP + phosphate + cellular proteinSide 2.. Its function is as follows. Part of the Sec protein translocase complex. Interacts with the SecYEG preprotein conducting channel. Has a central role in coupling the hydrolysis of ATP to the transfer of proteins into and across the cell membrane, serving as an ATP-driven molecular motor driving the stepwise translocation of polypeptide chains across the membrane. The sequence is that of Protein translocase subunit SecA 2 from Mycobacterium sp. (strain JLS).